A 123-amino-acid polypeptide reads, in one-letter code: DLLDDYVNTQGASLLTLSRKKLAGRSVEDCAAKCEEEAQDCYHGNGQSYRGTSSTTVTGRKCQSWSSMIPHRHQKTPESYPNAGLTMNYCRNPDADKSPWCYTTDPRVRWEFCNLKKCSEDSE.

The 79-residue stretch at 40–118 (DCYHGNGQSY…RWEFCNLKKC (79 aa)) folds into the Kringle domain. Disulfide bonds link Cys-41–Cys-118, Cys-62–Cys-101, and Cys-90–Cys-113.

This sequence belongs to the peptidase S1 family. Plasminogen subfamily. Interacts with CSPG4 and AMOT. Interacts (via the Kringle domains) with HRG; the interaction tethers PLG to the cell surface and enhances its activation. Interacts (via Kringle 4 domain) with ADA; the interaction stimulates PLG activation when in complex with DPP4. Angiostatin: Interacts with ATP5F1A; the interaction inhibits most of the angiogenic effects of angiostatin.

The protein resides in the secreted. The enzyme catalyses Preferential cleavage: Lys-|-Xaa &gt; Arg-|-Xaa, higher selectivity than trypsin. Converts fibrin into soluble products.. Converted into plasmin by plasminogen activators, both plasminogen and its activator being bound to fibrin. Cannot be activated with streptokinase. Functionally, plasmin dissolves the fibrin of blood clots and acts as a proteolytic factor in a variety of other processes including embryonic development, tissue remodeling, tumor invasion, and inflammation. In ovulation, weakens the walls of the Graafian follicle. It activates the urokinase-type plasminogen activator, collagenases and several complement zymogens, such as C1, C4 and C5. Cleavage of fibronectin and laminin leads to cell detachment and apoptosis. Also cleaves fibrin, thrombospondin and von Willebrand factor. Its role in tissue remodeling and tumor invasion may be modulated by CSPG4. Binds to cells. This chain is Plasminogen (PLG), found in Capra hircus (Goat).